We begin with the raw amino-acid sequence, 360 residues long: Phospho-N-acetylmuramoyl-pentapeptide-transferase (360 aa).

Transmembrane regions (helical) follow at residues 27–47 (GAMI…INSL), 71–91 (TPTM…LLWA), 93–113 (LASV…AIGF), 128–148 (FSGK…AFTI), 168–188 (LVIN…VGAG), 199–219 (GLAI…AYLS), 239–259 (LAVV…FNAP), 262–282 (AIFM…TVAV), 288–308 (IVLA…IIQV), and 337–357 (QVVI…LSTL).

This sequence belongs to the glycosyltransferase 4 family. MraY subfamily. Mg(2+) serves as cofactor.

It is found in the cell inner membrane. It carries out the reaction UDP-N-acetyl-alpha-D-muramoyl-L-alanyl-gamma-D-glutamyl-meso-2,6-diaminopimeloyl-D-alanyl-D-alanine + di-trans,octa-cis-undecaprenyl phosphate = di-trans,octa-cis-undecaprenyl diphospho-N-acetyl-alpha-D-muramoyl-L-alanyl-D-glutamyl-meso-2,6-diaminopimeloyl-D-alanyl-D-alanine + UMP. Its pathway is cell wall biogenesis; peptidoglycan biosynthesis. Functionally, catalyzes the initial step of the lipid cycle reactions in the biosynthesis of the cell wall peptidoglycan: transfers peptidoglycan precursor phospho-MurNAc-pentapeptide from UDP-MurNAc-pentapeptide onto the lipid carrier undecaprenyl phosphate, yielding undecaprenyl-pyrophosphoryl-MurNAc-pentapeptide, known as lipid I. The sequence is that of Phospho-N-acetylmuramoyl-pentapeptide-transferase from Brucella ovis (strain ATCC 25840 / 63/290 / NCTC 10512).